The sequence spans 379 residues: Dual-specificity RNA methyltransferase RlmN (379 aa).

The active-site Proton acceptor is the Glu97. One can recognise a Radical SAM core domain in the interval 103 to 343; sequence QGGRGTLCVS…VRTTRGDDID (241 aa). Cys110 and Cys346 are joined by a disulfide. Residues Cys117, Cys121, and Cys124 each contribute to the [4Fe-4S] cluster site. Residues 171–172, Ser203, 225–227, and Asn303 contribute to the S-adenosyl-L-methionine site; these read GE and SLH. Catalysis depends on Cys346, which acts as the S-methylcysteine intermediate.

The protein belongs to the radical SAM superfamily. RlmN family. It depends on [4Fe-4S] cluster as a cofactor.

Its subcellular location is the cytoplasm. The enzyme catalyses adenosine(2503) in 23S rRNA + 2 reduced [2Fe-2S]-[ferredoxin] + 2 S-adenosyl-L-methionine = 2-methyladenosine(2503) in 23S rRNA + 5'-deoxyadenosine + L-methionine + 2 oxidized [2Fe-2S]-[ferredoxin] + S-adenosyl-L-homocysteine. It catalyses the reaction adenosine(37) in tRNA + 2 reduced [2Fe-2S]-[ferredoxin] + 2 S-adenosyl-L-methionine = 2-methyladenosine(37) in tRNA + 5'-deoxyadenosine + L-methionine + 2 oxidized [2Fe-2S]-[ferredoxin] + S-adenosyl-L-homocysteine. In terms of biological role, specifically methylates position 2 of adenine 2503 in 23S rRNA and position 2 of adenine 37 in tRNAs. m2A2503 modification seems to play a crucial role in the proofreading step occurring at the peptidyl transferase center and thus would serve to optimize ribosomal fidelity. The sequence is that of Dual-specificity RNA methyltransferase RlmN from Pseudomonas aeruginosa (strain ATCC 15692 / DSM 22644 / CIP 104116 / JCM 14847 / LMG 12228 / 1C / PRS 101 / PAO1).